A 331-amino-acid chain; its full sequence is Carbonic anhydrase-related protein 11 (331 aa).

Positions 1–23 (MGGAARLSAPRALVLWAVLGAAA) are cleaved as a signal peptide. An Alpha-carbonic anhydrase domain is found at 33-306 (DWWSYKDNLQ…LAHRALRGNR (274 aa)). Residues asparagine 118, asparagine 170, asparagine 189, and asparagine 263 are each glycosylated (N-linked (GlcNAc...) asparagine). Residues 303 to 331 (RGNRDPRHPERRCRGPNYRLHVDGAPHGR) form a disordered region. Basic and acidic residues predominate over residues 322–331 (LHVDGAPHGR).

Belongs to the alpha-carbonic anhydrase family.

It is found in the secreted. Its function is as follows. Does not have a catalytic activity. This Sus scrofa (Pig) protein is Carbonic anhydrase-related protein 11 (CA11).